Reading from the N-terminus, the 330-residue chain is Aspartate--ammonia ligase (330 aa).

The protein belongs to the class-II aminoacyl-tRNA synthetase family. AsnA subfamily.

The protein resides in the cytoplasm. It carries out the reaction L-aspartate + NH4(+) + ATP = L-asparagine + AMP + diphosphate + H(+). It participates in amino-acid biosynthesis; L-asparagine biosynthesis; L-asparagine from L-aspartate (ammonia route): step 1/1. This is Aspartate--ammonia ligase from Shigella sonnei (strain Ss046).